Reading from the N-terminus, the 114-residue chain is Non-specific lipid-transfer protein 1 (114 aa).

An N-terminal signal peptide occupies residues 1-25; sequence MIKGLAITVVAVLAVVQLLARPSDA. Intrachain disulfides connect Cys29/Cys76, Cys39/Cys53, Cys54/Cys99, and Cys74/Cys113.

This sequence belongs to the plant LTP family. Expressed in seeds and, at very low levels, in pulp of fruit (at protein level).

Functionally, plant non-specific lipid-transfer proteins transfer phospholipids as well as galactolipids across membranes. May play a role in wax or cutin deposition in the cell walls of expanding epidermal cells and certain secretory tissues. The protein is Non-specific lipid-transfer protein 1 of Actinidia chinensis var. chinensis (Chinese soft-hair kiwi).